We begin with the raw amino-acid sequence, 382 residues long: MIKLENLTKQFVQKKGQPLKAVDNVNLNVPEGEMCVLLGPSGCGKTTTLKMINRLIAPSSGNILINGENTNDMDAVTLRRNIGYVIQQIGLFPNMTIEENITVVPRMLGWDKARCKQRAEELMDMVALDARKFLHRYPKEMSGGQQQRIGVIRALAADPPVLLMDEPFGAVDPINREVIQNQFLDMQRKLKKTVMLVSHDIDEALKLGDRIAVFRQGRIVQCASPDELLAKPANEFVGSFVGQDRTLKRLLLVSAGDVTDQQPTITARPSTPLSEAFGIMDDHDIRAITVIDNDGKPLGFVKRREARNASGICADITHPFRITGKAEDNLRIVLSRLYESNTSWMPIVDEDGRYNGEISQDYIADYLSSGRTRRALNIHENS.

The ABC transporter domain maps to Ile2 to Val241. Residue Gly39–Thr46 participates in ATP binding. 2 CBS domains span residues Val258–Phe320 and Ile322–Arg373.

Belongs to the ABC transporter superfamily. In terms of assembly, the complex is composed of two ATP-binding proteins (OsmV), two transmembrane proteins (OsmW and OsmY) and a solute-binding protein (OsmX).

The protein localises to the cell inner membrane. Its function is as follows. Part of the OsmU ABC transporter complex, which is involved in the uptake of osmoprotectants such as choline-O-sulfate and glycine betaine. Probably responsible for energy coupling to the transport system. The polypeptide is Osmoprotectant import ATP-binding protein OsmV (osmV) (Salmonella typhimurium (strain LT2 / SGSC1412 / ATCC 700720)).